The sequence spans 240 residues: Large ribosomal subunit protein uL2 (240 aa).

The segment covering 1–20 has biased composition (polar residues); sequence MGKRLQSQNRGKGTPRYTSP. Disordered stretches follow at residues 1–33 and 204–240; these read MGKRLQSQNRGKGTPRYTSPTHKRKGAVKYRKF and PFGGGNTQHAGKPTTISRHTSPGRKVGHIAARRTGKR. 2 stretches are compositionally biased toward basic residues: residues 21–30 and 224–240; these read THKRKGAVKY and SPGRKVGHIAARRTGKR.

Belongs to the universal ribosomal protein uL2 family. Part of the 50S ribosomal subunit. Forms a bridge to the 30S subunit in the 70S ribosome.

Its function is as follows. One of the primary rRNA binding proteins. Required for association of the 30S and 50S subunits to form the 70S ribosome, for tRNA binding and peptide bond formation. It has been suggested to have peptidyltransferase activity; this is somewhat controversial. Makes several contacts with the 16S rRNA in the 70S ribosome. The protein is Large ribosomal subunit protein uL2 of Methanococcus aeolicus (strain ATCC BAA-1280 / DSM 17508 / OCM 812 / Nankai-3).